Consider the following 159-residue polypeptide: 2-C-methyl-D-erythritol 2,4-cyclodiphosphate synthase (159 aa).

Positions 10 and 12 each coordinate a divalent metal cation. Residues 10-12 (DVH) and 36-37 (HS) each bind 4-CDP-2-C-methyl-D-erythritol 2-phosphate. Position 44 (histidine 44) interacts with a divalent metal cation. Residues 58–60 (DIG), 63–67 (FPDTD), 102–108 (AQAPKMA), 134–137 (TTTE), phenylalanine 141, and arginine 144 contribute to the 4-CDP-2-C-methyl-D-erythritol 2-phosphate site.

The protein belongs to the IspF family. In terms of assembly, homotrimer. A divalent metal cation is required as a cofactor.

It catalyses the reaction 4-CDP-2-C-methyl-D-erythritol 2-phosphate = 2-C-methyl-D-erythritol 2,4-cyclic diphosphate + CMP. It functions in the pathway isoprenoid biosynthesis; isopentenyl diphosphate biosynthesis via DXP pathway; isopentenyl diphosphate from 1-deoxy-D-xylulose 5-phosphate: step 4/6. Its function is as follows. Involved in the biosynthesis of isopentenyl diphosphate (IPP) and dimethylallyl diphosphate (DMAPP), two major building blocks of isoprenoid compounds. Catalyzes the conversion of 4-diphosphocytidyl-2-C-methyl-D-erythritol 2-phosphate (CDP-ME2P) to 2-C-methyl-D-erythritol 2,4-cyclodiphosphate (ME-CPP) with a corresponding release of cytidine 5-monophosphate (CMP). The chain is 2-C-methyl-D-erythritol 2,4-cyclodiphosphate synthase from Shewanella sp. (strain ANA-3).